A 272-amino-acid polypeptide reads, in one-letter code: R3H domain-containing protein 4 (272 aa).

Residues Leu141–Tyr167 are disordered. Basic and acidic residues predominate over residues Thr155–Pro165. The R3H domain occupies Met191–His254.

The protein resides in the nucleus. The chain is R3H domain-containing protein 4 (R3HDM4) from Bos taurus (Bovine).